Reading from the N-terminus, the 445-residue chain is Gamma-glutamyl phosphate reductase (445 aa).

This sequence belongs to the gamma-glutamyl phosphate reductase family.

It is found in the cytoplasm. It carries out the reaction L-glutamate 5-semialdehyde + phosphate + NADP(+) = L-glutamyl 5-phosphate + NADPH + H(+). Its pathway is amino-acid biosynthesis; L-proline biosynthesis; L-glutamate 5-semialdehyde from L-glutamate: step 2/2. In terms of biological role, catalyzes the NADPH-dependent reduction of L-glutamate 5-phosphate into L-glutamate 5-semialdehyde and phosphate. The product spontaneously undergoes cyclization to form 1-pyrroline-5-carboxylate. The polypeptide is Gamma-glutamyl phosphate reductase (Persephonella marina (strain DSM 14350 / EX-H1)).